A 464-amino-acid polypeptide reads, in one-letter code: Centrosomal protein of 55 kDa (464 aa).

Residues 1–11 show a composition bias toward basic and acidic residues; that stretch reads MSSRSTKDLIK. The tract at residues 1-26 is disordered; the sequence is MSSRSTKDLIKSKWGSKPSNSKSETT. 3 coiled-coil regions span residues 22 to 186, 238 to 337, and 374 to 403; these read KSET…QWLV, NDLL…FLYT, and QHQLHVILKELRKARNQITQLESLKQLHEF. Ser96 is modified (phosphoserine). An interaction with TSG101 region spans residues 157–236; it reads PNCFNSSINN…GYLQEEKQKC (80 aa). The interaction with PDCD6IP stretch occupies residues 160–214; sequence FNSSINNIHEMEIQLKDALEKNQQWLVYDQQREVYVKGLLAKIFELEKKTETAAH. Positions 355-464 are required for localization to the interphase centrosome and to the midbody during cytokinesis; the sequence is QMQACTLDFE…LLVHVEYCSK (110 aa). Ser425 and Ser428 each carry phosphoserine; by CDK1 and MAPK1. Thr430 carries the post-translational modification Phosphothreonine. The residue at position 436 (Ser436) is a Phosphoserine; by PLK1.

Homodimer. Interacts (phosphorylated on Ser-425 and Ser-428) with PLK1; the interaction is indirect via the MTMR3:MTMR4 heterooligomer, occurs during early mitosis, regulates the phosphorylation of CEP55 by PLK1 and its recruitment to the midbody where it can mediate cell abscission. Interacts with AKAP9/CG-NAP; the interaction occurs in interphase and is lost upon mitotic entry. Interacts with PCNT/Kendrin; the interaction occurs in interphase and is lost upon mitotic entry. Directly interacts with PDCD6IP; this interaction is required for PDCD6IP targeting to the midbody; CEP55 binds PDCD6IP in a 2:1 stoichiometry; PDCD6IP competes with TSG101 for the same binding site. Interacts with TSG101; TSG101 competes with PDCD6IP for the same binding site; interaction is required for cytokinesis but not for viral budding. Interacts with MVB12A, VPS37B, VPS37C and VPS28. Post-translationally, there is a hierachy of phosphorylation, where both Ser-425 and Ser-428 are phosphorylated at the onset of mitosis, prior to Ser-436. Phosphorylation at Ser-425 and Ser-428 is required for dissociation from the centrosome at the G2/M boundary. Phosphorylation at the 3 sites, Ser-425, Ser-428 and Ser-436, is required for protein function at the final stages of cell division to complete cytokinesis successfully. As to expression, expressed in embryonic brain. Expressed in fetal brain ganglionic eminence, kidney tubules and multinucleate neurons in the temporal cortex. Expressed in adult brain, cerebellum, kidney tubules, intestine and muscles (at protein level). Widely expressed, mostly in proliferative tissues. Highly expressed in testis. Intermediate levels in adult and fetal thymus, as well as in various cancer cell lines. Low levels in different parts of the digestive tract, bone marrow, lymph nodes, placenta, fetal heart and fetal spleen. Hardly detected in brain.

It localises to the cytoplasm. It is found in the cytoskeleton. Its subcellular location is the microtubule organizing center. The protein resides in the centrosome. The protein localises to the centriole. It localises to the cleavage furrow. It is found in the midbody. Its subcellular location is the midbody ring. Plays a role in mitotic exit and cytokinesis. Recruits PDCD6IP and TSG101 to midbody during cytokinesis. Required for successful completion of cytokinesis. Not required for microtubule nucleation. Plays a role in the development of the brain and kidney. The protein is Centrosomal protein of 55 kDa of Homo sapiens (Human).